The primary structure comprises 119 residues: Integration host factor subunit alpha (119 aa).

Residues 96-119 are disordered; sequence INGQQANGKMNGESAPSEFSAETE.

Belongs to the bacterial histone-like protein family. In terms of assembly, heterodimer of an alpha and a beta chain.

Its function is as follows. This protein is one of the two subunits of integration host factor, a specific DNA-binding protein that functions in genetic recombination as well as in transcriptional and translational control. The protein is Integration host factor subunit alpha of Bradyrhizobium sp. (strain ORS 278).